Consider the following 1237-residue polypeptide: Glutamate receptor ionotropic, NMDA 2C (1237 aa).

Residues 1–19 form the signal peptide; sequence MGGALGPALLLTSLLGAWA. Residues 20–554 are Extracellular-facing; the sequence is RLGAGQGEQA…SAFLEPYSPA (535 aa). N-linked (GlcNAc...) asparagine glycosylation is found at Asn70 and Asn73. Cys82 and Cys317 form a disulfide bridge. 2 N-linked (GlcNAc...) asparagine glycosylation sites follow: Asn337 and Asn438. 2 cysteine pairs are disulfide-bonded: Cys426-Cys453 and Cys433-Cys454. 3 residues coordinate L-glutamate: Ser509, Thr511, and Arg516. An N-linked (GlcNAc...) asparagine glycan is attached at Asn539. Residues 555–575 traverse the membrane as a helical segment; that stretch reads VWVMMFVMCLTVVAITVFMFE. The Cytoplasmic segment spans residues 576–601; it reads YFSPVSYNQNLTKGKKPGGPSFTIGK. Residues 601 to 620 are pore-forming; that stretch reads KSVWLLWALVFNNSVPIENP. Residues 602–611 constitute an intramembrane region (discontinuously helical); the sequence is SVWLLWALVF. Residues 612-622 lie on the Cytoplasmic side of the membrane; it reads NNSVPIENPRG. Residues 623–644 traverse the membrane as a helical segment; it reads TTSKIMVLVWAFFAVIFLASYT. Residues 645-813 lie on the Extracellular side of the membrane; the sequence is ANLAAFMIQE…EVMSSKLDID (169 aa). Asn685 carries N-linked (GlcNAc...) asparagine glycosylation. L-glutamate is bound by residues Ser687, Thr688, and Asp729. Cys743 and Cys798 are oxidised to a cystine. The helical transmembrane segment at 814-833 threads the bilayer; that stretch reads NMAGVFYMLLVAMGLALLVF. Over 834–1237 the chain is Cytoplasmic; that stretch reads AWEHLVYWKL…RRVSSLESEV (404 aa). A phosphoserine mark is found at Ser875, Ser881, and Ser912. Polar residues predominate over residues 907 to 925; it reads ADVSSSLDRATRTIENWGN. The tract at residues 907–990 is disordered; the sequence is ADVSSSLDRA…LPDVSRPSCR (84 aa). Residues 930–941 are compositionally biased toward low complexity; that stretch reads PAPTASGPRSST. Over residues 968 to 982 the composition is skewed to pro residues; sequence PQPPARPATCGPPLP. A PDZ-binding motif is present at residues 1235 to 1237; the sequence is SEV.

It belongs to the glutamate-gated ion channel (TC 1.A.10.1) family. NR2C/GRIN2C subfamily. As to quaternary structure, heterotetramer. Forms heterotetrameric channels composed of two GluN1/zeta subunits (GRIN1), and two identical GluN2/epsilon subunits (GRIN2A, GRIN2B, GRIN2C or GRIN2D) or GluN3 subunits (GRIN3A or GRIN3B) (in vitro). In vivo, the subunit composition may depend on the expression levels of the different subunits. Interacts with PDZ domains of PATJ and DLG4. Interacts (via PDZ-binding motif) with SNX27 (via PDZ domain); the interaction is required for recycling to the plasma membrane when endocytosed and prevent degradation in lysosomes. Detected in cerebellum.

The protein resides in the cell membrane. The protein localises to the postsynaptic cell membrane. The catalysed reaction is Ca(2+)(in) = Ca(2+)(out). The enzyme catalyses Na(+)(in) = Na(+)(out). It carries out the reaction K(+)(in) = K(+)(out). In terms of biological role, component of N-methyl-D-aspartate (NMDA) receptors (NMDARs) that function as heterotetrameric, ligand-gated cation channels with high calcium permeability and voltage-dependent block by Mg(2+). Participates in synaptic plasticity for learning and memory formation by contributing to the slow phase of excitatory postsynaptic current and long-term synaptic potentiation. Channel activation requires binding of the neurotransmitter L-glutamate to the GluN2 subunit, glycine or D-serine binding to the GluN1 subunit, plus membrane depolarization to eliminate channel inhibition by Mg(2+). NMDARs mediate simultaneously the potasium efflux and the influx of calcium and sodium. Each GluN2 subunit confers differential attributes to channel properties, including activation, deactivation and desensitization kinetics, pH sensitivity, Ca2(+) permeability, and binding to allosteric modulators. This Rattus norvegicus (Rat) protein is Glutamate receptor ionotropic, NMDA 2C.